A 460-amino-acid chain; its full sequence is V-type ATP synthase beta chain (460 aa).

This sequence belongs to the ATPase alpha/beta chains family.

Produces ATP from ADP in the presence of a proton gradient across the membrane. The V-type beta chain is a regulatory subunit. In Anaeromyxobacter sp. (strain Fw109-5), this protein is V-type ATP synthase beta chain.